A 419-amino-acid chain; its full sequence is Ribosome biogenesis protein NOP53 (419 aa).

Disordered regions lie at residues methionine 1–arginine 21 and lysine 233–glutamine 283. The segment covering lysine 233–alanine 261 has biased composition (basic and acidic residues). A phosphoserine mark is found at serine 242, serine 249, serine 252, and serine 256. Basic residues predominate over residues lysine 269–glutamine 283.

Belongs to the NOP53 family.

Its subcellular location is the nucleus. It localises to the nucleolus. The protein localises to the nucleoplasm. May play a role in ribosome biogenesis. In Schizosaccharomyces pombe (strain 972 / ATCC 24843) (Fission yeast), this protein is Ribosome biogenesis protein NOP53.